A 900-amino-acid chain; its full sequence is MQLHILNNPKDAALAADAEFLKQSLFNLLHEEASPLVVETVKLLSTSDDSAALIEKVLPQLDERQTYDLTLACGLFAQILNIAEDVHHERRRQIHEDAGHNAAEGSLTETVRRLKAGKADGKSVQRQLDNTSVTAVLTAHPTEVQRQTVLNFNRRIRALLPQRERCTNADALARLRREIDTVLLGLWQTSETRRHKLSVNDEINNGVSIFPMSFFEALPKLYRKMEHDFQTAYPDVRVPNILKIGGWIGGDRDGNPFVSGETLRFAFRRHADAVFRFYRSELDKLYRELPLSIRRVKVNDDVMALAALSPDEEIARTEEPYRRAIAYIMARAMGKARSLGLGMGCKFGFLEPYASAQKFLDDLKKLQRSLIDNGSRLLAEGRLADLIRSVSVFGFHMMPLDLRQHAGKHADVVAELFQHAGLEDYNSLNEEQKQAALLRELGHQRPLYSPFITYSDHTRRELAIFNEARKIKDEFGEDAVTQSIISNCEQPGDLLALALLLKESGLLAVENGKPHSRINIVPLFETIEALENACPVMETMFRLDWYDALLESRGNIQEIMLGYSDSNKDGGYVTSSWCLHQAELGLVELFKKYDVRMRLFHGRGGSVGRGGGPSYQAILAQPAGSVAGQIRITEQGEVITAKYADPGNAQRNLETLVAATLEASILPDKKDPDAKLMQALSDVSFKYYRELITHPDFIDYFLQTSPIQEIATLNLGSRPASRKTLARIQDLRAIPWVFSWMQNRLMLPAWYGFGSAVETLCEGSPETLAALRGHAQNNPFFQAMLSNMEQVMAKTDITLAENYAGLSESPEKAKVIFGMIKEEYRRSRKALLDLLQTEELLRDNRSLARSLALRIPYLNALNGLQVAMLKRLRKEPDNPHALLMVHLTINGVAQGLRNTG.

Active-site residues include His140 and Lys568.

The protein belongs to the PEPCase type 1 family. Requires Mg(2+) as cofactor.

The enzyme catalyses oxaloacetate + phosphate = phosphoenolpyruvate + hydrogencarbonate. Functionally, forms oxaloacetate, a four-carbon dicarboxylic acid source for the tricarboxylic acid cycle. The polypeptide is Phosphoenolpyruvate carboxylase (Neisseria gonorrhoeae (strain ATCC 700825 / FA 1090)).